A 431-amino-acid polypeptide reads, in one-letter code: uncharacterized protein (431 aa).

2 disordered regions span residues 1–37 and 102–132; these read MFWR…KLTP and PPPL…RRVA. A compositionally biased stretch (basic and acidic residues) spans 22–32; that stretch reads GDFRRSSDPRL. Residues 106–121 are compositionally biased toward low complexity; it reads LSAGASRESAPRQPGP. Basic and acidic residues predominate over residues 122-132; that stretch reads GERERPRRRVA.

The protein localises to the cytoplasm. This is an uncharacterized protein from Homo sapiens (Human).